The following is a 266-amino-acid chain: Phosphate import ATP-binding protein PstB 2 (266 aa).

The 240-residue stretch at 13-252 (LEAQGVNVYY…GPTEEIFQNP (240 aa)) folds into the ABC transporter domain. Residue 45 to 52 (GPSGCGKS) coordinates ATP.

It belongs to the ABC transporter superfamily. Phosphate importer (TC 3.A.1.7) family. As to quaternary structure, the complex is composed of two ATP-binding proteins (PstB), two transmembrane proteins (PstC and PstA) and a solute-binding protein (PstS).

It localises to the cell inner membrane. The enzyme catalyses phosphate(out) + ATP + H2O = ADP + 2 phosphate(in) + H(+). Functionally, part of the ABC transporter complex PstSACB involved in phosphate import. Responsible for energy coupling to the transport system. This is Phosphate import ATP-binding protein PstB 2 from Synechocystis sp. (strain ATCC 27184 / PCC 6803 / Kazusa).